A 425-amino-acid chain; its full sequence is Stabilizer of axonemal microtubules 4 (425 aa).

Disordered regions lie at residues 259–297 (RGSDRDTGYSRVSERSLNPRMPTPSSQPTSMSHRSYQPP) and 315–335 (NKEPTGFTLNNPSYVRSSYEQ). Over residues 260–272 (GSDRDTGYSRVSE) the composition is skewed to basic and acidic residues. Residues 277 to 290 (PRMPTPSSQPTSMS) are compositionally biased toward low complexity. Positions 321 to 332 (FTLNNPSYVRSS) are enriched in polar residues.

In terms of assembly, microtubule inner protein component of sperm flagellar doublet microtubules. Interacts with PPP1CA. Expressed in brain, ovaries and testis. Expressed in the tracheal epithelium and in secondary spermatocytes and spermatids present in the seminiferous tubule. Expressed in ependymal cells lining the ventricular walls of the brain.

It is found in the cell projection. The protein localises to the cilium. Its subcellular location is the cytoplasm. It localises to the cytoskeleton. The protein resides in the flagellum axoneme. This Rattus norvegicus (Rat) protein is Stabilizer of axonemal microtubules 4.